The primary structure comprises 417 residues: Blood group Rh(CE) polypeptide (417 aa).

The next 11 helical transmembrane spans lie at 12–32 (CLPL…YFFT), 44–64 (LVAS…GLGF), 77–97 (VAFN…LDGF), 125–145 (ISAG…MVLV), 172–192 (FYVF…KPLP), 203–223 (TIPS…WPSV), 238–258 (MFNT…GSSL), 265–285 (ISMT…GTSC), 287–307 (LIPS…ISIG), 331–351 (IFSL…VLHT), and 358–378 (MIGF…VIAL).

It belongs to the ammonium transporter (TC 2.A.49) family. Rh subfamily. In terms of assembly, heterotrimer; a RHCE monomer interacts with a RHAG homodimer. Component of the ankyrin-1 complex in the erythrocyte, composed of ANK1, RHCE, RHAG, SLC4A1, EPB42, GYPA, GYPB and AQP1. Interacts (via the N- and C-terminal) with ANK1 (via ANk 1-5 repeats); mediates the primary membrane attachment site for ANK1. In terms of tissue distribution, restricted to tissues or cell lines expressing erythroid characters. Isoform 4g and isoform RhPI-Alpha are expressed in immature erythroblasts but not in mature erythroblasts.

The protein resides in the membrane. Component of the ankyrin-1 complex, a multiprotein complex involved in the stability and shape of the erythrocyte membrane. Mediates the primary membrane attachment site for ANK1 when associated with RHAG. May participate in the ammonium and carbon dioxide transport through the heterotrimer form. This Homo sapiens (Human) protein is Blood group Rh(CE) polypeptide.